We begin with the raw amino-acid sequence, 328 residues long: L-lactate dehydrogenase (328 aa).

NAD(+)-binding positions include V18, E39, K46, Y71, and 85-86 (GA). Q88 and R94 together coordinate substrate. NAD(+)-binding positions include S107, 124-126 (AAN), and S149. 126–129 (NPVD) contributes to the substrate binding site. Residue 154–157 (DSAR) participates in substrate binding. 2 residues coordinate beta-D-fructose 1,6-bisphosphate: R159 and H174. Residue H181 is the Proton acceptor of the active site. At Y226 the chain carries Phosphotyrosine. Substrate is bound at residue T235.

This sequence belongs to the LDH/MDH superfamily. LDH family. As to quaternary structure, homotetramer.

The protein localises to the cytoplasm. The enzyme catalyses (S)-lactate + NAD(+) = pyruvate + NADH + H(+). The protein operates within fermentation; pyruvate fermentation to lactate; (S)-lactate from pyruvate: step 1/1. With respect to regulation, allosterically activated by fructose 1,6-bisphosphate (FBP). Its function is as follows. Catalyzes the conversion of lactate to pyruvate. This is L-lactate dehydrogenase from Streptococcus sanguinis (strain SK36).